Reading from the N-terminus, the 822-residue chain is AP-1 complex subunit gamma-1 (822 aa).

A disordered region spans residues glutamate 597–leucine 628. A GAE domain is found at alanine 702–proline 817.

Belongs to the adaptor complexes large subunit family. As to quaternary structure, adaptor protein complex 1 (AP-1) is a heterotetramer composed of two large adaptins (gamma-type subunit AP1G1 and beta-type subunit AP1B1), a medium adaptin (mu-type subunit AP1M1 or AP1M2) and a small adaptin (sigma-type subunit AP1S1 or AP1S2 or AP1S3). Interacts (via GAE domain) with RABEP1. Interacts with EPS15. Interacts with SYNRG/gamma-synergin. Interacts (via GAE domain) with AP1AR (via coiled-coil domain). Interacts with CLN3 (via dileucine motif); this interaction facilitates lysosomal targeting. Interacts (via GAE domain) with AFTPH/aftiphilin; the interaction is required to recruit AFTPH/aftiphilin to the perinuclear region of the cell.

The protein localises to the golgi apparatus. Its subcellular location is the cytoplasmic vesicle. The protein resides in the clathrin-coated vesicle membrane. It localises to the cytoplasm. It is found in the perinuclear region. The protein localises to the clathrin-coated vesicle. Its subcellular location is the membrane. The protein resides in the clathrin-coated pit. Functionally, subunit of clathrin-associated adaptor protein complex 1 that plays a role in protein sorting in the late-Golgi/trans-Golgi network (TGN) and/or endosomes. The AP complexes mediate both the recruitment of clathrin to membranes and the recognition of sorting signals within the cytosolic tails of transmembrane cargo molecules. In association with AFTPH/aftiphilin in the aftiphilin/p200/gamma-synergin complex, involved in the trafficking of transferrin from early to recycling endosomes, and the membrane trafficking of furin and the lysosomal enzyme cathepsin D between the trans-Golgi network (TGN) and endosomes. In Pongo abelii (Sumatran orangutan), this protein is AP-1 complex subunit gamma-1 (AP1G1).